Consider the following 523-residue polypeptide: NADH-ubiquinone oxidoreductase chain 4 (523 aa).

A run of 14 helical transmembrane segments spans residues 22–42 (FFIMSYIEMVLAIPLLGAIAL), 62–82 (LLTFLISLLLWIEFDSSSALF), 120–140 (ISLFFIILTTLLVPICILVSW), 149–169 (EYCIAFLVLETLMLTVFSVLD), 170–190 (LLLFYIFFESVLIPMFIIIGV), 204–224 (FFLYTLFGSVLMLLAILLIYF), 246–266 (ILWLAFFASFAVKVPMVPVHI), 276–296 (PTAGSVILAGILLKLGTYGFL), 303–323 (FPYACIYFTPLIYTMSVIAIV), 338–358 (IIAYSSVAHMNFVTIGLFSQN), 366–386 (ILLMISHGLVSPALFLCVGVL), 404–424 (TMPIFALLFVFFTMANISLPG), 444–464 (FVAFCAATGMVLGAAYALWLC), and 488–508 (FFMFAPLIAGILWIGVYPEPF).

This sequence belongs to the complex I subunit 4 family.

It localises to the mitochondrion membrane. The enzyme catalyses a ubiquinone + NADH + 5 H(+)(in) = a ubiquinol + NAD(+) + 4 H(+)(out). Functionally, core subunit of the mitochondrial membrane respiratory chain NADH dehydrogenase (Complex I) that is believed to belong to the minimal assembly required for catalysis. Complex I functions in the transfer of electrons from NADH to the respiratory chain. The immediate electron acceptor for the enzyme is believed to be ubiquinone. In Prototheca wickerhamii, this protein is NADH-ubiquinone oxidoreductase chain 4 (ND4).